The sequence spans 293 residues: NAD-dependent protein deacetylase (293 aa).

The 284-residue stretch at 1-284 (MTVAITQTGP…QPPDPLHTAT (284 aa)) folds into the Deacetylase sirtuin-type domain. Residues 27 to 47 (GAGC…GGWK) and 105 to 108 (QNVD) each bind NAD(+). His-123 acts as the Proton acceptor in catalysis. The Zn(2+) site is built by Cys-131, Cys-134, Cys-182, and Cys-185. NAD(+) is bound by residues 222–224 (GSS), 248–250 (NFG), and Cys-266.

This sequence belongs to the sirtuin family. Class II subfamily. Requires Zn(2+) as cofactor.

The protein localises to the cytoplasm. It catalyses the reaction N(6)-acetyl-L-lysyl-[protein] + NAD(+) + H2O = 2''-O-acetyl-ADP-D-ribose + nicotinamide + L-lysyl-[protein]. Its function is as follows. NAD-dependent protein deacetylase which modulates the activities of several enzymes which are inactive in their acetylated form. The polypeptide is NAD-dependent protein deacetylase (Xanthomonas campestris pv. campestris (strain 8004)).